A 94-amino-acid chain; its full sequence is Co-chaperonin GroES (94 aa).

The protein belongs to the GroES chaperonin family. Heptamer of 7 subunits arranged in a ring. Interacts with the chaperonin GroEL.

It is found in the cytoplasm. In terms of biological role, together with the chaperonin GroEL, plays an essential role in assisting protein folding. The GroEL-GroES system forms a nano-cage that allows encapsulation of the non-native substrate proteins and provides a physical environment optimized to promote and accelerate protein folding. GroES binds to the apical surface of the GroEL ring, thereby capping the opening of the GroEL channel. The chain is Co-chaperonin GroES from Clostridioides difficile (strain 630) (Peptoclostridium difficile).